The primary structure comprises 220 residues: N-(5'-phosphoribosyl)anthranilate isomerase (220 aa).

The protein belongs to the TrpF family.

The enzyme catalyses N-(5-phospho-beta-D-ribosyl)anthranilate = 1-(2-carboxyphenylamino)-1-deoxy-D-ribulose 5-phosphate. It functions in the pathway amino-acid biosynthesis; L-tryptophan biosynthesis; L-tryptophan from chorismate: step 3/5. This Gloeothece citriformis (strain PCC 7424) (Cyanothece sp. (strain PCC 7424)) protein is N-(5'-phosphoribosyl)anthranilate isomerase.